The following is a 342-amino-acid chain: Ribosomal RNA small subunit methyltransferase C (342 aa).

The protein belongs to the methyltransferase superfamily. RsmC family. Monomer.

The protein localises to the cytoplasm. It carries out the reaction guanosine(1207) in 16S rRNA + S-adenosyl-L-methionine = N(2)-methylguanosine(1207) in 16S rRNA + S-adenosyl-L-homocysteine + H(+). Functionally, specifically methylates the guanine in position 1207 of 16S rRNA in the 30S particle. The sequence is that of Ribosomal RNA small subunit methyltransferase C from Salmonella gallinarum (strain 287/91 / NCTC 13346).